The following is a 270-amino-acid chain: Phthiotriol/phenolphthiotriol dimycocerosates methyltransferase (270 aa).

It belongs to the methyltransferase superfamily. Phthiotriol/phenolphthiotriol dimycocerosates methyltransferase family.

In terms of biological role, catalyzes the methylation of the lipid moiety of the intermediate compounds phthiotriol and glycosylated phenolphthiotriol dimycoserosates to form phthiocerol dimycocerosates (DIM A) and glycosylated phenolphthiocerol dimycocerosates (PGL). The sequence is that of Phthiotriol/phenolphthiotriol dimycocerosates methyltransferase from Mycobacterium bovis (strain ATCC BAA-935 / AF2122/97).